The primary structure comprises 174 residues: Co-chaperone protein HscB homolog (174 aa).

The J domain maps to 2-74 (NYFELFSFTP…ILRAEHMLSL (73 aa)).

It belongs to the HscB family. As to quaternary structure, interacts with HscA and stimulates its ATPase activity.

Its function is as follows. Co-chaperone involved in the maturation of iron-sulfur cluster-containing proteins. Seems to help targeting proteins to be folded toward HscA. The protein is Co-chaperone protein HscB homolog of Shewanella woodyi (strain ATCC 51908 / MS32).